The following is a 406-amino-acid chain: LIM/homeobox protein Lhx2 (406 aa).

2 consecutive LIM zinc-binding domains span residues 53–105 (CAGC…CKED) and 115–168 (CARC…CRLH). The tract at residues 250–270 (DAEHLDRDQPYPSSQKTKRMR) is disordered. A DNA-binding region (homeobox) is located at residues 266-325 (TKRMRTSFKHHQLRTMKSYFAINHNPDAKDLKQLAQKTGLTKRVLQVWFQNARAKFRRNL). A Nuclear localization signal motif is present at residues 307-323 (KRVLQVWFQNARAKFRR). Residues 328–356 (QENTGVDKSTDAALQTGTPSGPASELSNA) show a composition bias toward polar residues. Disordered regions lie at residues 328–374 (QENT…TSPT) and 387–406 (GNLE…TNLF). Residues 357-374 (SLSPSSTPTTLTDLTSPT) are compositionally biased toward low complexity. A compositionally biased stretch (polar residues) spans 396–406 (SPSQTTLTNLF).

Interacts (via LIM domains) with CITED2. Interacts with POU4F2.

Its subcellular location is the nucleus. Functionally, acts as a transcriptional activator. Stimulates the promoter of the alpha-glycoprotein gene. Transcriptional regulatory protein involved in the control of cell differentiation in developing lymphoid and neural cell types. The polypeptide is LIM/homeobox protein Lhx2 (LHX2) (Homo sapiens (Human)).